A 488-amino-acid polypeptide reads, in one-letter code: Glutamyl-tRNA(Gln) amidotransferase subunit A (488 aa).

Residues Lys-77 and Ser-152 each act as charge relay system in the active site. Residue Ser-176 is the Acyl-ester intermediate of the active site.

This sequence belongs to the amidase family. GatA subfamily. Heterotrimer of A, B and C subunits.

The catalysed reaction is L-glutamyl-tRNA(Gln) + L-glutamine + ATP + H2O = L-glutaminyl-tRNA(Gln) + L-glutamate + ADP + phosphate + H(+). Functionally, allows the formation of correctly charged Gln-tRNA(Gln) through the transamidation of misacylated Glu-tRNA(Gln) in organisms which lack glutaminyl-tRNA synthetase. The reaction takes place in the presence of glutamine and ATP through an activated gamma-phospho-Glu-tRNA(Gln). The polypeptide is Glutamyl-tRNA(Gln) amidotransferase subunit A (Streptococcus suis (strain 05ZYH33)).